Reading from the N-terminus, the 224-residue chain is MLIEIPNVFSKEEVNQLREELDARTWIDGNQTSGVMASTRKRNQQLDKDDPVVLRIGELIMARLLAHPLFVSAALPLQFYPPLFNRYQGGETFGYHIDNAIRSTSDGMVRTDLSATLFLSEPDTYQGGELVIQDTYGQQSIKLAAGSLVLYPSTSLHQVTPVTSGERTAAFMWLQSMVRDEGQRRLLFQLDQSIQALTAQAAPERELFNLTGVYHNLLRRWSEL.

One can recognise a Fe2OG dioxygenase domain in the interval 78-176 (QFYPPLFNRY…RTAAFMWLQS (99 aa)). Residues His-96, Asp-98, and His-157 each contribute to the Fe cation site. Arg-167 serves as a coordination point for 2-oxoglutarate.

It depends on Fe(2+) as a cofactor. Requires L-ascorbate as cofactor.

In Shewanella sp. (strain MR-7), this protein is PKHD-type hydroxylase Shewmr7_0698.